Here is a 701-residue protein sequence, read N- to C-terminus: Polyribonucleotide nucleotidyltransferase (701 aa).

Residues aspartate 487 and aspartate 493 each contribute to the Mg(2+) site. Residues 554–613 (PTMIAMKIDTDKIRDVIGKGGATIRAICEETKASIDIEDDGSIKIFGETKEAADAAKQRI) form the KH domain. Positions 623 to 691 (GKIYVGKVER…NRGRIKLSIK (69 aa)) constitute an S1 motif domain.

It belongs to the polyribonucleotide nucleotidyltransferase family. Component of the RNA degradosome, which is a multiprotein complex involved in RNA processing and mRNA degradation. Requires Mg(2+) as cofactor.

The protein resides in the cytoplasm. The enzyme catalyses RNA(n+1) + phosphate = RNA(n) + a ribonucleoside 5'-diphosphate. Its function is as follows. Involved in mRNA degradation. Catalyzes the phosphorolysis of single-stranded polyribonucleotides processively in the 3'- to 5'-direction. The polypeptide is Polyribonucleotide nucleotidyltransferase (Pseudomonas putida (Arthrobacter siderocapsulatus)).